The primary structure comprises 91 residues: Ice-structuring protein 2A7 (91 aa).

The signal sequence occupies residues 1–21; sequence MALSLFTVGQLIFLFWTMRIT. A propeptide spans 22–39 (removed by a dipeptidylpeptidase); that stretch reads EANPDPAAKAVPAAAAPD.

The protein belongs to the type-I AFP family. In terms of tissue distribution, detected in blood serum (at protein level).

It localises to the secreted. Functionally, contributes to protect fish blood from freezing at subzero sea water temperatures. Lowers the blood freezing point. Binds to nascent ice crystals and prevents further growth. This Pseudopleuronectes americanus (Winter flounder) protein is Ice-structuring protein 2A7.